The following is a 284-amino-acid chain: NAD kinase (284 aa).

The active-site Proton acceptor is the Asp67. Residues 67–68 (DG), 141–142 (ND), Arg152, Lys169, Asp171, 182–187 (TGYSLS), and Gln241 contribute to the NAD(+) site.

The protein belongs to the NAD kinase family. A divalent metal cation is required as a cofactor.

The protein localises to the cytoplasm. The enzyme catalyses NAD(+) + ATP = ADP + NADP(+) + H(+). Its function is as follows. Involved in the regulation of the intracellular balance of NAD and NADP, and is a key enzyme in the biosynthesis of NADP. Catalyzes specifically the phosphorylation on 2'-hydroxyl of the adenosine moiety of NAD to yield NADP. This is NAD kinase from Geotalea daltonii (strain DSM 22248 / JCM 15807 / FRC-32) (Geobacter daltonii).